Consider the following 33-residue polypeptide: Photosystem II reaction center protein Psb30 (33 aa).

A helical membrane pass occupies residues 5–25 (VIAQLIALALIVGSGPLVIAL).

Belongs to the Psb30/Ycf12 family. As to quaternary structure, PSII is composed of 1 copy each of membrane proteins PsbA, PsbB, PsbC, PsbD, PsbE, PsbF, PsbH, PsbI, PsbJ, PsbK, PsbL, PsbM, PsbT, PsbX, PsbY, PsbZ, Psb30/Ycf12, peripheral proteins of the oxygen-evolving complex and a large number of cofactors. It forms dimeric complexes.

Its subcellular location is the plastid. It is found in the chloroplast thylakoid membrane. In terms of biological role, a core subunit of photosystem II (PSII), probably helps stabilize the reaction center. This Physcomitrium patens (Spreading-leaved earth moss) protein is Photosystem II reaction center protein Psb30.